A 734-amino-acid polypeptide reads, in one-letter code: NAD(P)H-quinone oxidoreductase subunit 5, chloroplastic (734 aa).

Helical transmembrane passes span 9 to 29 (WVIP…LFLV), 39 to 59 (IWAF…VHLS), 89 to 109 (IDPL…LVLI), 125 to 145 (FVYI…SNLI), 147 to 167 (IYFF…FWFT), 185 to 205 (GDFG…SLEF), 224 to 244 (LLTI…SAQF), 258 to 278 (TPIS…FLIA), 280 to 300 (LLPL…IGTL), 327 to 347 (LGYM…FHLI), 354 to 374 (ALLF…VGYS), 396 to 416 (TCFL…CFWS), 425 to 445 (WLYS…TAFY), 542 to 562 (LFPL…GIHF), 605 to 625 (SLAI…YSFF), and 714 to 734 (ISSY…FFLS).

Belongs to the complex I subunit 5 family. NDH is composed of at least 16 different subunits, 5 of which are encoded in the nucleus.

Its subcellular location is the plastid. The protein resides in the chloroplast thylakoid membrane. The catalysed reaction is a plastoquinone + NADH + (n+1) H(+)(in) = a plastoquinol + NAD(+) + n H(+)(out). It carries out the reaction a plastoquinone + NADPH + (n+1) H(+)(in) = a plastoquinol + NADP(+) + n H(+)(out). Functionally, NDH shuttles electrons from NAD(P)H:plastoquinone, via FMN and iron-sulfur (Fe-S) centers, to quinones in the photosynthetic chain and possibly in a chloroplast respiratory chain. The immediate electron acceptor for the enzyme in this species is believed to be plastoquinone. Couples the redox reaction to proton translocation, and thus conserves the redox energy in a proton gradient. This is NAD(P)H-quinone oxidoreductase subunit 5, chloroplastic (ndhF) from Oryza nivara (Indian wild rice).